A 137-amino-acid polypeptide reads, in one-letter code: UPF0275 protein PM0489 (137 aa).

The protein belongs to the UPF0275 family.

The chain is UPF0275 protein PM0489 from Pasteurella multocida (strain Pm70).